We begin with the raw amino-acid sequence, 291 residues long: Flavonol synthase/flavanone 3-hydroxylase (291 aa).

The 100-residue stretch at 151–250 folds into the Fe2OG dioxygenase domain; sequence CWYVMNINHY…RMSWPVLVSP (100 aa). Fe cation contacts are provided by His175, Asp177, and His231.

This sequence belongs to the iron/ascorbate-dependent oxidoreductase family. Requires L-ascorbate as cofactor. Fe cation is required as a cofactor.

It is found in the cytoplasm. It carries out the reaction a (2R,3R)-dihydroflavonol + 2-oxoglutarate + O2 = a flavonol + succinate + CO2 + H2O. It catalyses the reaction a (2S)-flavan-4-one + 2-oxoglutarate + O2 = a (2R,3R)-dihydroflavonol + succinate + CO2. The protein operates within secondary metabolite biosynthesis; flavonoid biosynthesis. Functionally, catalyzes the formation of flavonols from dihydroflavonols. It can act on dihydrokaempferol to produce kaempferol, on dihydroquercetin to produce quercitin and on dihydromyricetin to produce myricetin. This is Flavonol synthase/flavanone 3-hydroxylase from Matthiola incana (Common stock).